Here is a 269-residue protein sequence, read N- to C-terminus: Capsid assembly scaffolding protein (269 aa).

This sequence belongs to the T4likevirus capsid assembly scaffolding protein family.

The protein localises to the virion. Its function is as follows. Scaffolding protein involved in the icosahedric procapsid assembly. Coassembles with the capsid proteins to form the procapsid, in which the scaffolding protein is found within the external shell of icosahedrally arranged capsid protein subunits. In a subsequent step the scaffolding protein molecules are cleaved by the viral protease and released, except for the internal peptide VII. Functionally, cleavage product of Gp22 that is incorporated into the mature phage head. This is Capsid assembly scaffolding protein (22) from Escherichia phage AR1 (Bacteriophage AR1).